Consider the following 216-residue polypeptide: Probable transaldolase (216 aa).

K84 functions as the Schiff-base intermediate with substrate in the catalytic mechanism.

This sequence belongs to the transaldolase family. Type 3B subfamily.

It is found in the cytoplasm. It carries out the reaction D-sedoheptulose 7-phosphate + D-glyceraldehyde 3-phosphate = D-erythrose 4-phosphate + beta-D-fructose 6-phosphate. It participates in carbohydrate degradation; pentose phosphate pathway; D-glyceraldehyde 3-phosphate and beta-D-fructose 6-phosphate from D-ribose 5-phosphate and D-xylulose 5-phosphate (non-oxidative stage): step 2/3. Its function is as follows. Transaldolase is important for the balance of metabolites in the pentose-phosphate pathway. This Lysinibacillus sphaericus (strain C3-41) protein is Probable transaldolase.